The sequence spans 463 residues: L-seryl-tRNA(Sec) selenium transferase (463 aa).

Residue Lys-295 is modified to N6-(pyridoxal phosphate)lysine.

Belongs to the SelA family. Homodecamer; pentamer of dimers. Binds only one seryl-tRNA(Sec) per dimer. Requires pyridoxal 5'-phosphate as cofactor.

It is found in the cytoplasm. The catalysed reaction is L-seryl-tRNA(Sec) + selenophosphate + H(+) = L-selenocysteinyl-tRNA(Sec) + phosphate. It participates in aminoacyl-tRNA biosynthesis; selenocysteinyl-tRNA(Sec) biosynthesis; selenocysteinyl-tRNA(Sec) from L-seryl-tRNA(Sec) (bacterial route): step 1/1. Converts seryl-tRNA(Sec) to selenocysteinyl-tRNA(Sec) required for selenoprotein biosynthesis. This chain is L-seryl-tRNA(Sec) selenium transferase, found in Serratia proteamaculans (strain 568).